The sequence spans 218 residues: Small ribosomal subunit protein uS3c (218 aa).

The KH type-2 domain occupies 47-118 (VQKQIKNSSN…KIQITLKNVL (72 aa)).

Belongs to the universal ribosomal protein uS3 family. In terms of assembly, part of the 30S ribosomal subunit.

Its subcellular location is the plastid. It is found in the chloroplast. The polypeptide is Small ribosomal subunit protein uS3c (rps3) (Angiopteris evecta (Mule's foot fern)).